We begin with the raw amino-acid sequence, 398 residues long: Serine/threonine-protein kinase 32A (398 aa).

A lipid anchor (N-myristoyl glycine) is attached at Gly2. The Protein kinase domain occupies 23 to 281; it reads FEILRAIGKG…LTDIQNFPYM (259 aa). Residues 29-37 and Lys52 contribute to the ATP site; that span reads IGKGSFGKV. The Proton acceptor role is filled by Asp146. A disordered region spans residues 379–398; that stretch reads ALEQTKNNTEEEEDGQNNNL. Residues 388–398 show a composition bias toward acidic residues; the sequence is EEEEDGQNNNL.

Belongs to the protein kinase superfamily. Ser/Thr protein kinase family. Requires Mg(2+) as cofactor.

The protein localises to the cell membrane. It carries out the reaction L-seryl-[protein] + ATP = O-phospho-L-seryl-[protein] + ADP + H(+). It catalyses the reaction L-threonyl-[protein] + ATP = O-phospho-L-threonyl-[protein] + ADP + H(+). This Mus musculus (Mouse) protein is Serine/threonine-protein kinase 32A.